Consider the following 95-residue polypeptide: Large ribosomal subunit protein uL23 (95 aa).

It belongs to the universal ribosomal protein uL23 family. As to quaternary structure, part of the 50S ribosomal subunit. Contacts protein L29, and trigger factor when it is bound to the ribosome.

Its function is as follows. One of the early assembly proteins it binds 23S rRNA. One of the proteins that surrounds the polypeptide exit tunnel on the outside of the ribosome. Forms the main docking site for trigger factor binding to the ribosome. This Fusobacterium nucleatum subsp. nucleatum (strain ATCC 25586 / DSM 15643 / BCRC 10681 / CIP 101130 / JCM 8532 / KCTC 2640 / LMG 13131 / VPI 4355) protein is Large ribosomal subunit protein uL23.